The following is a 61-amino-acid chain: Progonadoliberin-1 (61 aa).

Q1 is subject to Pyrrolidone carboxylic acid. G10 bears the Glycine amide mark.

This sequence belongs to the GnRH family.

The protein resides in the secreted. In terms of biological role, stimulates the secretion of gonadotropins; it stimulates the secretion of both luteinizing and follicle-stimulating hormones. The sequence is that of Progonadoliberin-1 (GNRH1) from Ovis aries (Sheep).